Reading from the N-terminus, the 250-residue chain is MGAAASIQTTVNTLSERISSKLEQEANASAQTKCDIEIGNFYIRQNHGCNLTVKNMCSADADAQLDAVLSAATETYSGLTPEQKAYVPAMFTAALNIQTSVNTVVRDFENYVKQTCNSSAVVDNKLKIQNVIIDECYGAPGSPTNLEFINTGSSKGNCAIKALMQLTTKATTQIAPRQVAGTGVQFYMIVIGVIILAALFMYYAKRMLFTSTNDKIKLILANKENVHWTTYMDTFFRTSPMVIATTDIQN.

Gly-2 is lipidated: N-myristoyl glycine; by host. A targeting to MV membrane region spans residues 2 to 12 (GAAASIQTTVN). At 2–183 (GAAASIQTTV…IAPRQVAGTG (182 aa)) the chain is on the virion surface side. 3 cysteine pairs are disulfide-bonded: Cys-34/Cys-57, Cys-49/Cys-136, and Cys-116/Cys-158. A helical transmembrane segment spans residues 184-204 (VQFYMIVIGVIILAALFMYYA). The Intravirion portion of the chain corresponds to 205–250 (KRMLFTSTNDKIKLILANKENVHWTTYMDTFFRTSPMVIATTDIQN).

Belongs to the orthopoxvirus OPG095 family. In terms of assembly, component of the entry fusion complex (EFC) composed of OPG053, OPG076, OPG086, OPG094, OPG095, OPG099, OPG107, OPG143, OPG104, OPG147 and OPG155. Except for OPG095 and OPG053, each of the EFC proteins is required for assembly or stability of the complex. Post-translationally, myristoylated. In terms of processing, disulfid bonds are oxidized in the cytoplasm by OPG088 protein. Unglycosylated because produced in viral factories instead of the classic ER -Golgi route.

It localises to the virion membrane. Its function is as follows. Component of the entry fusion complex (EFC), which consists of 11 proteins. During cell infection, this complex mediates entry of the virion core into the host cytoplasm by a two-step mechanism consisting of lipid mixing of the viral and cellular membranes and subsequent pore formation. The chain is Entry-fusion complex associated protein OPG095 (OPG099) from Variola virus (isolate Human/India/Ind3/1967) (VARV).